A 361-amino-acid chain; its full sequence is Phosphoserine aminotransferase (361 aa).

An L-glutamate-binding site is contributed by R42. Residues 76-77, W102, T153, D173, and Q196 each bind pyridoxal 5'-phosphate; that span reads AR. K197 is modified (N6-(pyridoxal phosphate)lysine). 238 to 239 contacts pyridoxal 5'-phosphate; it reads NT.

The protein belongs to the class-V pyridoxal-phosphate-dependent aminotransferase family. SerC subfamily. Homodimer. Pyridoxal 5'-phosphate serves as cofactor.

The protein resides in the cytoplasm. It catalyses the reaction O-phospho-L-serine + 2-oxoglutarate = 3-phosphooxypyruvate + L-glutamate. The enzyme catalyses 4-(phosphooxy)-L-threonine + 2-oxoglutarate = (R)-3-hydroxy-2-oxo-4-phosphooxybutanoate + L-glutamate. It participates in amino-acid biosynthesis; L-serine biosynthesis; L-serine from 3-phospho-D-glycerate: step 2/3. Its pathway is cofactor biosynthesis; pyridoxine 5'-phosphate biosynthesis; pyridoxine 5'-phosphate from D-erythrose 4-phosphate: step 3/5. Catalyzes the reversible conversion of 3-phosphohydroxypyruvate to phosphoserine and of 3-hydroxy-2-oxo-4-phosphonooxybutanoate to phosphohydroxythreonine. In Mannheimia succiniciproducens (strain KCTC 0769BP / MBEL55E), this protein is Phosphoserine aminotransferase.